A 590-amino-acid polypeptide reads, in one-letter code: Cationic amino acid transporter 8, vacuolar (590 aa).

Residues 1–85 (MIPASMEEAH…ESENPMRRCL (85 aa)) lie on the Cytoplasmic side of the membrane. The chain crosses the membrane as a helical span at residues 86-106 (TWWDLLWLSFGSVVGSGVFVI). Over 107–114 (TGQEARVG) the chain is Vacuolar. A helical membrane pass occupies residues 115–135 (AGPAVVLSYAISGVSALLSVL). At 136 to 160 (CYAEFGVEIPVAGGSFSYLRVELGD) the chain is on the cytoplasmic side. Residues 161 to 181 (FIAFIAAGNILLEAMVGAAGL) form a helical membrane-spanning segment. Residues 182–209 (GRSWSSYLASLVKNDSDYFRIKVDSFAK) lie on the Vacuolar side of the membrane. Asn195 carries N-linked (GlcNAc...) asparagine glycosylation. Residues 210-230 (GFDLLDPVAVAVLLVANGIAM) form a helical membrane-spanning segment. At 231–238 (TGTKRTSW) the chain is on the cytoplasmic side. The chain crosses the membrane as a helical span at residues 239–259 (LNLITSMVTVCIIVFIVVVGF). Topologically, residues 260 to 266 (THSKTSN) are vacuolar. Residues 267–287 (LVPFFPYGAKGVVQSAAVVYW) traverse the membrane as a helical segment. The Cytoplasmic segment spans residues 288–310 (SYTGFDMVANMAEETEKPSRDIP). A helical membrane pass occupies residues 311-331 (IGLVGSMSMITVVYCLMALAL). The Vacuolar segment spans residues 332–359 (TMMVKYTEIDANAAYSVAFAQIGMKWAK). A helical membrane pass occupies residues 360-380 (YLVGICALKGMTTSLLVGSLG). Over 381–407 (QARYTTQIARSHMIPPWFALVHPKTGT) the chain is Cytoplasmic. The helical transmembrane segment at 408–428 (PIYATLLVTILSSIISFFTSL) threads the bilayer. Glu429 is a topological domain (vacuolar). A helical membrane pass occupies residues 430–450 (VLSSVFSFATLFIFMLVAVAL). The Cytoplasmic portion of the chain corresponds to 451–465 (LVRRYYVKDVTPEAG). A helical transmembrane segment spans residues 466–486 (LLKFLGFLFLIIASSIGVSAL). The Vacuolar segment spans residues 487-493 (WNSGVKG). Residues 494–514 (WIAYTVTGVIWFIGTLGLALL) form a helical membrane-spanning segment. Residues 515 to 522 (PKYRVPKV) are Cytoplasmic-facing. Residues 523-543 (WGVPLVPWLPSFSIAMNLFLI) traverse the membrane as a helical segment. At 544 to 553 (GSLGYVAFLR) the chain is on the vacuolar side. A helical membrane pass occupies residues 554-574 (FIICTMVMLLYYLFVGLHATY). Residues 575–590 (DVAHQPLEEAKFEGER) are Cytoplasmic-facing.

Belongs to the amino acid-polyamine-organocation (APC) superfamily. Cationic amino acid transporter (CAT) (TC 2.A.3.3) family. As to expression, expressed in roots, stems, flowers and leaves. Mostly present in young and rapidly dividing tissues such as the shoot and root apical meristem, and in young leaves and petioles during seedling development.

It is found in the cell membrane. Functionally, permease involved in the transport of the cationic neutral or acidic amino acids. This is Cationic amino acid transporter 8, vacuolar (CAT8) from Arabidopsis thaliana (Mouse-ear cress).